The primary structure comprises 312 residues: Dihydroorotate dehydrogenase B (NAD(+)), catalytic subunit (312 aa).

FMN is bound by residues S23 and 47–48; that span reads KA. Substrate contacts are provided by residues K47 and 71–75; that span reads NAIGL. FMN contacts are provided by N103 and N131. Residue N131 coordinates substrate. The active-site Nucleophile is C134. FMN is bound by residues K171 and I197. 198 to 199 provides a ligand contact to substrate; sequence NT. Residues G223, 249 to 250, and 271 to 272 each bind FMN; these read GG and GT.

This sequence belongs to the dihydroorotate dehydrogenase family. Type 1 subfamily. In terms of assembly, heterotetramer of 2 PyrK and 2 PyrD type B subunits. FMN is required as a cofactor.

The protein localises to the cytoplasm. It catalyses the reaction (S)-dihydroorotate + NAD(+) = orotate + NADH + H(+). Its pathway is pyrimidine metabolism; UMP biosynthesis via de novo pathway; orotate from (S)-dihydroorotate (NAD(+) route): step 1/1. Functionally, catalyzes the conversion of dihydroorotate to orotate with NAD(+) as electron acceptor. This is Dihydroorotate dehydrogenase B (NAD(+)), catalytic subunit (pyrDB) from Streptococcus pneumoniae (strain ATCC BAA-255 / R6).